The chain runs to 268 residues: Tryptophan synthase alpha chain (268 aa).

Catalysis depends on proton acceptor residues E49 and D60.

It belongs to the TrpA family. Tetramer of two alpha and two beta chains.

The enzyme catalyses (1S,2R)-1-C-(indol-3-yl)glycerol 3-phosphate + L-serine = D-glyceraldehyde 3-phosphate + L-tryptophan + H2O. The protein operates within amino-acid biosynthesis; L-tryptophan biosynthesis; L-tryptophan from chorismate: step 5/5. Functionally, the alpha subunit is responsible for the aldol cleavage of indoleglycerol phosphate to indole and glyceraldehyde 3-phosphate. In Xanthomonas euvesicatoria pv. vesicatoria (strain 85-10) (Xanthomonas campestris pv. vesicatoria), this protein is Tryptophan synthase alpha chain.